The chain runs to 216 residues: Probable transaldolase (216 aa).

Lys-85 functions as the Schiff-base intermediate with substrate in the catalytic mechanism.

It belongs to the transaldolase family. Type 3B subfamily.

The protein localises to the cytoplasm. The enzyme catalyses D-sedoheptulose 7-phosphate + D-glyceraldehyde 3-phosphate = D-erythrose 4-phosphate + beta-D-fructose 6-phosphate. Its pathway is carbohydrate degradation; pentose phosphate pathway; D-glyceraldehyde 3-phosphate and beta-D-fructose 6-phosphate from D-ribose 5-phosphate and D-xylulose 5-phosphate (non-oxidative stage): step 2/3. Its function is as follows. Transaldolase is important for the balance of metabolites in the pentose-phosphate pathway. The protein is Probable transaldolase of Dehalococcoides mccartyi (strain ATCC BAA-2266 / KCTC 15142 / 195) (Dehalococcoides ethenogenes (strain 195)).